Consider the following 209-residue polypeptide: Small ribosomal subunit protein uS4 (209 aa).

The S4 RNA-binding domain occupies 99-164 (GRLDSVVYRM…QLRVKAALEA (66 aa)).

This sequence belongs to the universal ribosomal protein uS4 family. As to quaternary structure, part of the 30S ribosomal subunit. Contacts protein S5. The interaction surface between S4 and S5 is involved in control of translational fidelity.

Its function is as follows. One of the primary rRNA binding proteins, it binds directly to 16S rRNA where it nucleates assembly of the body of the 30S subunit. Functionally, with S5 and S12 plays an important role in translational accuracy. The protein is Small ribosomal subunit protein uS4 of Aromatoleum aromaticum (strain DSM 19018 / LMG 30748 / EbN1) (Azoarcus sp. (strain EbN1)).